Here is a 128-residue protein sequence, read N- to C-terminus: Ribonuclease P protein component (128 aa).

It belongs to the RnpA family. In terms of assembly, consists of a catalytic RNA component (M1 or rnpB) and a protein subunit.

The enzyme catalyses Endonucleolytic cleavage of RNA, removing 5'-extranucleotides from tRNA precursor.. In terms of biological role, RNaseP catalyzes the removal of the 5'-leader sequence from pre-tRNA to produce the mature 5'-terminus. It can also cleave other RNA substrates such as 4.5S RNA. The protein component plays an auxiliary but essential role in vivo by binding to the 5'-leader sequence and broadening the substrate specificity of the ribozyme. In Methylococcus capsulatus (strain ATCC 33009 / NCIMB 11132 / Bath), this protein is Ribonuclease P protein component.